A 588-amino-acid polypeptide reads, in one-letter code: Adenine deaminase (588 aa).

This sequence belongs to the metallo-dependent hydrolases superfamily. Adenine deaminase family. In terms of assembly, homodimer. Mn(2+) serves as cofactor.

It carries out the reaction adenine + H2O + H(+) = hypoxanthine + NH4(+). The chain is Adenine deaminase from Escherichia coli (strain SMS-3-5 / SECEC).